The chain runs to 30 residues: Cyclotide hyen-D (30 aa).

The segment at residues 1–30 is a cross-link (cyclopeptide (Gly-Asn)); it reads GFPCGESCVYIPCFTAAIGCSCKSKVCYKN. Intrachain disulfides connect cysteine 4–cysteine 20, cysteine 8–cysteine 22, and cysteine 13–cysteine 27.

Post-translationally, this is a cyclic peptide. In terms of tissue distribution, detected in stems (at protein level).

Its function is as follows. Probably participates in a plant defense mechanism. Has strong cytotoxic activity against HUVEC cells (LC(50)= 0.58 uM) and various cancer cells including HeLa (LC(50)= 0.48 uM), MCF-7 and K562. Also displays some hemolytic activity. Binds to and induces leakage in phospholipd membranes, particularly ones containing 1-palmitoyl-2-oleophosphatidylethanolamine (POPE). The chain is Cyclotide hyen-D from Pigea enneasperma (Spade flower).